Consider the following 432-residue polypeptide: Glutamyl-tRNA reductase (432 aa).

Substrate is bound by residues 49 to 52 (TCNR), Ser-107, 112 to 114 (ETQ), and Gln-118. The Nucleophile role is filled by Cys-50. 186–191 (GAGEMG) serves as a coordination point for NADP(+).

This sequence belongs to the glutamyl-tRNA reductase family. Homodimer.

The catalysed reaction is (S)-4-amino-5-oxopentanoate + tRNA(Glu) + NADP(+) = L-glutamyl-tRNA(Glu) + NADPH + H(+). It functions in the pathway porphyrin-containing compound metabolism; protoporphyrin-IX biosynthesis; 5-aminolevulinate from L-glutamyl-tRNA(Glu): step 1/2. In terms of biological role, catalyzes the NADPH-dependent reduction of glutamyl-tRNA(Glu) to glutamate 1-semialdehyde (GSA). The polypeptide is Glutamyl-tRNA reductase (Campylobacter jejuni (strain RM1221)).